Reading from the N-terminus, the 345-residue chain is Dihydroorotase (345 aa).

Zn(2+) contacts are provided by His-14 and His-16. Substrate-binding positions include 16-18 and Asn-42; that span reads HLR. Positions 102, 139, and 177 each coordinate Zn(2+). At Lys-102 the chain carries N6-carboxylysine. His-139 provides a ligand contact to substrate. Residue Leu-222 participates in substrate binding. Asp-250 is a binding site for Zn(2+). The active site involves Asp-250. Substrate is bound by residues His-254 and Ala-266.

The protein belongs to the metallo-dependent hydrolases superfamily. DHOase family. Class II DHOase subfamily. Homodimer. Zn(2+) is required as a cofactor.

It carries out the reaction (S)-dihydroorotate + H2O = N-carbamoyl-L-aspartate + H(+). It participates in pyrimidine metabolism; UMP biosynthesis via de novo pathway; (S)-dihydroorotate from bicarbonate: step 3/3. Functionally, catalyzes the reversible cyclization of carbamoyl aspartate to dihydroorotate. The chain is Dihydroorotase from Nitrosomonas eutropha (strain DSM 101675 / C91 / Nm57).